Consider the following 104-residue polypeptide: uncharacterized protein (104 aa).

A coiled-coil region spans residues 42-104; the sequence is ARDSFDQDFE…AREERHKLGR (63 aa).

This sequence belongs to the WXG100 family.

This is an uncharacterized protein from Bacillus subtilis (strain 168).